The chain runs to 335 residues: Histidinol-phosphatase (335 aa).

The protein belongs to the PHP hydrolase family. HisK subfamily.

The catalysed reaction is L-histidinol phosphate + H2O = L-histidinol + phosphate. It functions in the pathway amino-acid biosynthesis; L-histidine biosynthesis; L-histidine from 5-phospho-alpha-D-ribose 1-diphosphate: step 8/9. The chain is Histidinol-phosphatase (HIS2) from Saccharomyces cerevisiae (strain ATCC 204508 / S288c) (Baker's yeast).